A 275-amino-acid chain; its full sequence is Transmembrane protein 106B (275 aa).

The segment at 1–24 (MGKSLSHLPLHSNKEDGYDGVTST) is disordered. Gly-2 is lipidated: N-myristoyl glycine. Over 2–97 (GKSLSHLPLH…QRLRPRRTKL (96 aa)) the chain is Cytoplasmic. Ser-34 is modified (phosphoserine). The helical transmembrane segment at 98–118 (YVMASVFVCLLLSGLAVFFLF) threads the bilayer. Over 119–275 (PRSIDVKYIG…EYLNVLQPQQ (157 aa)) the chain is Lumenal. Asn-146, Asn-152, Asn-165, and Asn-184 each carry an N-linked (GlcNAc...) asparagine glycan. A disulfide bond links Cys-215 and Cys-254. Asn-257 carries N-linked (GlcNAc...) asparagine glycosylation.

Belongs to the TMEM106 family. As to quaternary structure, can form homomers. Interacts (via N-terminus) with MAP6 (via C-terminus). Interacts (via C-terminus) with the vacuolar-type ATPase subunit ATP6AP1. Interacts (via N-terminus) with AP2M1 and CLTC. Interacts with TMEM106C. Expressed in cortical neurons (at protein level).

Its subcellular location is the late endosome membrane. It localises to the lysosome membrane. The protein resides in the cell membrane. In terms of biological role, involved in dendrite morphogenesis and maintenance by regulating lysosomal trafficking. May act as a molecular brake for retrograde transport of late endosomes/lysosomes, possibly via its interaction with MAP6. In neurons, may also play a role in the regulation of lysosomal size and responsiveness to stress. Required for proper lysosomal acidification. Its function is as follows. In neurons, involved in the transport of late endosomes/lysosomes. May be involved in dendrite morphogenesis and maintenance by regulating lysosomal trafficking. May act as a molecular brake for retrograde transport of late endosomes/lysosomes, possibly via its interaction with MAP6. In motoneurons, may mediate the axonal transport of lysosomes and axonal sorting at the initial segment. It remains unclear whether TMEM106B affects the transport of moving lysosomes in the anterograde or retrograde direction in neurites and whether it is particularly important in the sorting of lysosomes in axons or in dendrites. In neurons, may also play a role in the regulation of lysosomal size and responsiveness to stress. Required for proper lysosomal acidification. This is Transmembrane protein 106B (Tmem106b) from Rattus norvegicus (Rat).